Reading from the N-terminus, the 707-residue chain is Ribosomal RNA large subunit methyltransferase K/L (707 aa).

Residues 43 to 154 (QIYRCCLWSR…KDKAILGVDM (112 aa)) enclose the THUMP domain.

This sequence belongs to the methyltransferase superfamily. RlmKL family.

Its subcellular location is the cytoplasm. The enzyme catalyses guanosine(2445) in 23S rRNA + S-adenosyl-L-methionine = N(2)-methylguanosine(2445) in 23S rRNA + S-adenosyl-L-homocysteine + H(+). It catalyses the reaction guanosine(2069) in 23S rRNA + S-adenosyl-L-methionine = N(2)-methylguanosine(2069) in 23S rRNA + S-adenosyl-L-homocysteine + H(+). Its function is as follows. Specifically methylates the guanine in position 2445 (m2G2445) and the guanine in position 2069 (m7G2069) of 23S rRNA. In Vibrio campbellii (strain ATCC BAA-1116), this protein is Ribosomal RNA large subunit methyltransferase K/L.